Consider the following 584-residue polypeptide: Insulin-like growth factor 2 mRNA-binding protein 3 (584 aa).

RRM domains lie at 2-75 (NKLY…HSVP) and 81-156 (RKLQ…YIPD). The disordered stretch occupies residues 160 to 199 (AQQPPQQHPQGRRGFGQRGPPRQGSPSATTRQKPQSDVPL). Residues 184–194 (SPSATTRQKPQ) show a composition bias toward polar residues. 4 KH domains span residues 196-261 (DVPL…CKII), 277-344 (EIPL…EEEI), 409-474 (SETV…QGRI), and 491-557 (KLEA…QRKI).

This sequence belongs to the RRM IMP/VICKZ family. Homodimer and multimer.

Its subcellular location is the cytoplasm. The protein localises to the nucleus. It is found in the P-body. The protein resides in the stress granule. Its function is as follows. RNA-binding factor that may recruit target transcripts to cytoplasmic protein-RNA complexes (mRNPs). This transcript 'caging' into mRNPs allows mRNA transport and transient storage. It also modulates the rate and location at which target transcripts encounter the translational apparatus and shields them from endonuclease attacks or microRNA-mediated degradation. Preferentially binds to N6-methyladenosine (m6A)-containing mRNAs and increases their stability. This is Insulin-like growth factor 2 mRNA-binding protein 3 (IGF2BP3) from Gallus gallus (Chicken).